A 39-amino-acid chain; its full sequence is Photosystem II reaction center protein X (39 aa).

The helical transmembrane segment at S10–I30 threads the bilayer.

It belongs to the PsbX family. Type 1 subfamily. PSII is composed of 1 copy each of membrane proteins PsbA, PsbB, PsbC, PsbD, PsbE, PsbF, PsbH, PsbI, PsbJ, PsbK, PsbL, PsbM, PsbT, PsbX, PsbY, Psb30/Ycf12, peripheral proteins PsbO, CyanoQ (PsbQ), PsbU, PsbV and a large number of cofactors. It forms dimeric complexes.

Its subcellular location is the cellular thylakoid membrane. Involved in the binding and/or turnover of quinones at the Q(B) site of photosystem II (PSII). PSII is a light-driven water plastoquinone oxidoreductase, using light energy to abstract electrons from H(2)O, generating a proton gradient subsequently used for ATP formation. This is Photosystem II reaction center protein X from Prochlorococcus marinus (strain MIT 9303).